We begin with the raw amino-acid sequence, 262 residues long: MARGLKKHLKRLNAPRHWMLDKLGGAFAPKPSSGPHKSRECLPLILILRNRLKYALTYREVIAILMQRHVMVDGKVRTDKTYPAGFMDVVSIPKTNEDFRLLYDTKGRFCLHAITGDETKFKLCKVRSVQFGQKGIPYLNTYDGRTIRYPDPLIKANDTIKLDLESNKIVDFIKFDVGNVVMVTGGRNRGRVGVIKNREKHKGSFETIHVQDAAGHEFATRLGNVFTIGKGTKPWVSLPKRKGIKLSIIEEARKRLAAQNAA.

Residues 42–104 (LPLILILRNR…TNEDFRLLYD (63 aa)) form the S4 RNA-binding domain.

This sequence belongs to the eukaryotic ribosomal protein eS4 family.

It localises to the cytoplasm. The sequence is that of Small ribosomal subunit protein eS4 (RPS4) from Gossypium hirsutum (Upland cotton).